The chain runs to 554 residues: DNA ligase (554 aa).

Glutamate 253 serves as a coordination point for ATP. Lysine 255 acts as the N6-AMP-lysine intermediate in catalysis. The ATP site is built by arginine 260, arginine 275, glutamate 304, phenylalanine 344, arginine 418, and lysine 424.

It belongs to the ATP-dependent DNA ligase family. It depends on Mg(2+) as a cofactor.

The catalysed reaction is ATP + (deoxyribonucleotide)n-3'-hydroxyl + 5'-phospho-(deoxyribonucleotide)m = (deoxyribonucleotide)n+m + AMP + diphosphate.. DNA ligase that seals nicks in double-stranded DNA during DNA replication, DNA recombination and DNA repair. This Haloarcula marismortui (strain ATCC 43049 / DSM 3752 / JCM 8966 / VKM B-1809) (Halobacterium marismortui) protein is DNA ligase.